The sequence spans 373 residues: Citrate synthase (373 aa).

Active-site residues include H262 and D314.

Belongs to the citrate synthase family. As to quaternary structure, homohexamer.

It carries out the reaction oxaloacetate + acetyl-CoA + H2O = citrate + CoA + H(+). It participates in carbohydrate metabolism; tricarboxylic acid cycle; isocitrate from oxaloacetate: step 1/2. This is Citrate synthase (ctsA) from Heyndrickxia coagulans (Weizmannia coagulans).